The primary structure comprises 203 residues: Endo-type membrane-bound lytic murein transglycosylase A (203 aa).

Residues 1 to 15 (MKLRWFAFLIVLLAG) form the signal peptide. Residue Cys16 is the site of N-palmitoyl cysteine attachment. The S-diacylglycerol cysteine moiety is linked to residue Cys16.

The protein belongs to the transglycosylase Slt family.

The protein resides in the cell outer membrane. The catalysed reaction is Endolytic cleavage of the (1-&gt;4)-beta-glycosidic linkage between N-acetylmuramic acid (MurNAc) and N-acetylglucosamine (GlcNAc) residues in peptidoglycan with concomitant formation of a 1,6-anhydrobond in the MurNAc residue.. Its function is as follows. Murein-degrading enzyme. May play a role in recycling of muropeptides during cell elongation and/or cell division. Preferentially cleaves at a distance of more than two disaccharide units from the ends of the glycan chain. This Escherichia coli (strain K12 / MC4100 / BW2952) protein is Endo-type membrane-bound lytic murein transglycosylase A.